The primary structure comprises 108 residues: Replication initiation control protein YabA (108 aa).

Residues H83, C85, C99, and C102 each coordinate Zn(2+).

It belongs to the YabA family. In terms of assembly, homotetramer. Interacts with both DnaA and DnaN, acting as a bridge between these two proteins. Requires Zn(2+) as cofactor.

It is found in the cytoplasm. The protein localises to the nucleoid. Involved in control of chromosome replication initiation. Inhibits the cooperative binding of DnaA to the oriC region, thus negatively regulating initiation of chromosome replication. Inhibits the ability of DnaA-ATP to form a helix on DNA; does not disassemble preformed DnaA-DNA helices. Decreases the residence time of DnaA on the chromosome at its binding sites (oriC, replication forks and promoter-binding sites). Tethers DnaA to the replication machinery via the DNA polymerase beta sliding clamp subunit (dnaN). Associates with oriC and other DnaA targets on the chromosome in a DnaA-dependent manner. The sequence is that of Replication initiation control protein YabA from Lactococcus lactis subsp. lactis (strain IL1403) (Streptococcus lactis).